We begin with the raw amino-acid sequence, 100 residues long: NADH-quinone oxidoreductase subunit K (100 aa).

The next 3 helical transmembrane spans lie at 2 to 22 (ITLSHYLVVAALMFVLGLIGI), 29 to 49 (IMLFFSSEILLNAANVALAAI), and 63 to 83 (LFIVAVAASEVAVGLGLLILW).

The protein belongs to the complex I subunit 4L family. As to quaternary structure, NDH-1 is composed of 14 different subunits. Subunits NuoA, H, J, K, L, M, N constitute the membrane sector of the complex.

It localises to the cell inner membrane. The catalysed reaction is a quinone + NADH + 5 H(+)(in) = a quinol + NAD(+) + 4 H(+)(out). NDH-1 shuttles electrons from NADH, via FMN and iron-sulfur (Fe-S) centers, to quinones in the respiratory chain. The immediate electron acceptor for the enzyme in this species is believed to be ubiquinone. Couples the redox reaction to proton translocation (for every two electrons transferred, four hydrogen ions are translocated across the cytoplasmic membrane), and thus conserves the redox energy in a proton gradient. This is NADH-quinone oxidoreductase subunit K from Campylobacter curvus (strain 525.92).